The sequence spans 324 residues: DNA-directed RNA polymerase subunit alpha (324 aa).

Residues 1 to 228 (MIEIQKPTIR…EHFNLFTDLS (228 aa)) form an alpha N-terminal domain (alpha-NTD) region. An alpha C-terminal domain (alpha-CTD) region spans residues 245 to 324 (RNKLLDMTIE…STPKGEEEEK (80 aa)).

The protein belongs to the RNA polymerase alpha chain family. In terms of assembly, homodimer. The RNAP catalytic core consists of 2 alpha, 1 beta, 1 beta' and 1 omega subunit. When a sigma factor is associated with the core the holoenzyme is formed, which can initiate transcription.

It catalyses the reaction RNA(n) + a ribonucleoside 5'-triphosphate = RNA(n+1) + diphosphate. Its function is as follows. DNA-dependent RNA polymerase catalyzes the transcription of DNA into RNA using the four ribonucleoside triphosphates as substrates. In Caldicellulosiruptor saccharolyticus (strain ATCC 43494 / DSM 8903 / Tp8T 6331), this protein is DNA-directed RNA polymerase subunit alpha.